The primary structure comprises 436 residues: UPF0597 protein YhaM (436 aa).

The protein belongs to the UPF0597 family.

This is UPF0597 protein YhaM from Salmonella paratyphi A (strain ATCC 9150 / SARB42).